A 213-amino-acid chain; its full sequence is Glycerol-3-phosphate acyltransferase (213 aa).

6 helical membrane passes run 2-22, 52-74, 81-100, 112-132, 143-163, and 164-184; these read ITIV…GLWI, AGMA…PIIF, PLIF…FAGF, VIFG…FGAL, VTAS…GFIL, and SNYD…IIIR.

This sequence belongs to the PlsY family. Probably interacts with PlsX.

Its subcellular location is the cell membrane. It carries out the reaction an acyl phosphate + sn-glycerol 3-phosphate = a 1-acyl-sn-glycero-3-phosphate + phosphate. It participates in lipid metabolism; phospholipid metabolism. Functionally, catalyzes the transfer of an acyl group from acyl-phosphate (acyl-PO(4)) to glycerol-3-phosphate (G3P) to form lysophosphatidic acid (LPA). This enzyme utilizes acyl-phosphate as fatty acyl donor, but not acyl-CoA or acyl-ACP. This chain is Glycerol-3-phosphate acyltransferase, found in Streptococcus pneumoniae (strain ATCC 700669 / Spain 23F-1).